The primary structure comprises 323 residues: C-type lectin domain family 11 member A (323 aa).

Positions 1-21 (MQAAWLLGALVVPQLLGFGHG) are cleaved as a signal peptide. Disordered regions lie at residues 55–106 (LGLP…TPED) and 272–295 (LGAQPSASPHPLSPDQPNGGTLEN). Positions 61–63 (RGD) match the Cell attachment site motif. A compositionally biased stretch (acidic residues) spans 74 to 90 (EDWEMEEDQGEEEEEEA). The C-type lectin domain maps to 183 to 320 (LGHKCFLLSR…CQRRLYYVCE (138 aa)). Disulfide bonds link Cys204/Cys319 and Cys296/Cys311.

In terms of processing, O-glycosylated. Probably sulfated on the O-glycans. Expressed in skeletal tissues including bone marrow, chondrocytes, primary ossification center-associated cells, the perichondrium and periosteum. Lower levels of expression were detected in spleen, thymus, appendix and fetal liver.

Its subcellular location is the cytoplasm. The protein resides in the secreted. Its function is as follows. Promotes osteogenesis by stimulating the differentiation of mesenchymal progenitors into mature osteoblasts. Important for repair and maintenance of adult bone. The polypeptide is C-type lectin domain family 11 member A (CLEC11A) (Homo sapiens (Human)).